A 246-amino-acid polypeptide reads, in one-letter code: Exosome complex component Rrp41 (246 aa).

Belongs to the RNase PH family. Rrp41 subfamily. In terms of assembly, component of the archaeal exosome complex. Forms a hexameric ring-like arrangement composed of 3 Rrp41-Rrp42 heterodimers. The hexameric ring associates with a trimer of Rrp4 and/or Csl4 subunits.

The protein resides in the cytoplasm. Functionally, catalytic component of the exosome, which is a complex involved in RNA degradation. Has 3'-&gt;5' exoribonuclease activity. Can also synthesize heteromeric RNA-tails. This is Exosome complex component Rrp41 from Aeropyrum pernix (strain ATCC 700893 / DSM 11879 / JCM 9820 / NBRC 100138 / K1).